We begin with the raw amino-acid sequence, 581 residues long: MYRLLGPLACLALAWFFTWAPSGRCRCRPWETCWPSVADWSALNESMQGNLIRIRPVASVCHGSEYEAAACANVSNMVVDSGWRASNPRTLQDWIWETGNTAQESCFDTTWPGYHHRTSDCHQGRIPLYSAIVESTSDIQSCVKFANHHNLRLVIKNSGHDTAGRSSAPHSFQISTSSLKTISLHENFVPRGSTTGHGPAVTLGAGVMQWEVYAHGVKNAYTILGGECPTVGAVGAFLQGGGVSSIKSFTKGLAVDNVLEFQVVTSNADLVTANENENQDLFWALRGGGGGTFGFVAQATIRVFPDDPVTVATTTIKAAVTNTMFWTEGVRELFRLVQHFNDMHIPGQLVMTRPTTDSMQATLELHFANTTDEAHVTRLLNSQLRPLTLHHISTSTLVRVQERESSELRTKPDIYPPHYGIVAGSVLISAATLRKAQGQSHVASKLSQLPLGSNDIMFTSNLGGRVFENSAIDISLHPAWREAAHLITLVRAVEPTIEDRDSQVSYRNLGDPQEKEFRDRYWGTANYARLAAIKAKWDPHELFMSKLGVGSENWDEEGICRKSLGFVERLSAILKLERWKN.

A signal peptide spans 1-25 (MYRLLGPLACLALAWFFTWAPSGRC). N-linked (GlcNAc...) asparagine glycosylation is found at asparagine 44 and asparagine 73. An FAD-binding PCMH-type domain is found at 122–306 (HQGRIPLYSA…AQATIRVFPD (185 aa)). Residue asparagine 369 is glycosylated (N-linked (GlcNAc...) asparagine).

The protein belongs to the oxygen-dependent FAD-linked oxidoreductase family. FAD serves as cofactor.

The protein operates within alkaloid biosynthesis; ergot alkaloid biosynthesis. In terms of biological role, FAD-linked oxidoreductase; part of the gene cluster that mediates the biosynthesis of fungal ergot alkaloid. DmaW catalyzes the first step of ergot alkaloid biosynthesis by condensing dimethylallyl diphosphate (DMAP) and tryptophan to form 4-dimethylallyl-L-tryptophan. The second step is catalyzed by the methyltransferase easF that methylates 4-dimethylallyl-L-tryptophan in the presence of S-adenosyl-L-methionine, resulting in the formation of 4-dimethylallyl-L-abrine. The catalase easC and the FAD-dependent oxidoreductase easE then transform 4-dimethylallyl-L-abrine to chanoclavine-I which is further oxidized by easD in the presence of NAD(+), resulting in the formation of chanoclavine-I aldehyde. Agroclavine dehydrogenase easG then mediates the conversion of chanoclavine-I aldehyde to agroclavine via a non-enzymatic adduct reaction: the substrate is an iminium intermediate that is formed spontaneously from chanoclavine-I aldehyde in the presence of glutathione. Further conversion of agroclavine to paspalic acid is a two-step process involving oxidation of agroclavine to elymoclavine and of elymoclavine to paspalic acid, the second step being performed by the elymoclavine oxidase cloA. However, cloA does not encode a functional enzyme indicating that C.fusiformis terminates its ergot alkaloid pathway at elymoclavine. The polypeptide is FAD-linked oxidoreductase easE (Claviceps fusiformis (Ergot fungus)).